A 347-amino-acid polypeptide reads, in one-letter code: Selenide, water dikinase (347 aa).

Cys-17 is a catalytic residue. ATP is bound by residues Lys-20 and 48 to 50 (TRD). Residue Asp-51 coordinates Mg(2+). Residues Asp-68, Asp-91, and 139–141 (GHS) contribute to the ATP site. Mg(2+) is bound at residue Asp-91. A Mg(2+)-binding site is contributed by Asp-227.

This sequence belongs to the selenophosphate synthase 1 family. Class I subfamily. In terms of assembly, homodimer. Mg(2+) is required as a cofactor.

The catalysed reaction is hydrogenselenide + ATP + H2O = selenophosphate + AMP + phosphate + 2 H(+). Functionally, synthesizes selenophosphate from selenide and ATP. The protein is Selenide, water dikinase of Cronobacter sakazakii (strain ATCC BAA-894) (Enterobacter sakazakii).